The chain runs to 85 residues: Phosphocarrier protein HPr (85 aa).

The HPr domain maps to methionine 1 to glutamate 85. Histidine 15 (pros-phosphohistidine intermediate) is an active-site residue.

The protein belongs to the HPr family.

It localises to the cytoplasm. Functionally, general (non sugar-specific) component of the phosphoenolpyruvate-dependent sugar phosphotransferase system (sugar PTS). This major carbohydrate active-transport system catalyzes the phosphorylation of incoming sugar substrates concomitantly with their translocation across the cell membrane. The phosphoryl group from phosphoenolpyruvate (PEP) is transferred to the phosphoryl carrier protein HPr by enzyme I. Phospho-HPr then transfers it to the PTS EIIA domain. In Buchnera aphidicola subsp. Schizaphis graminum (strain Sg), this protein is Phosphocarrier protein HPr (ptsH).